We begin with the raw amino-acid sequence, 85 residues long: MAHKKAGGSSRNGRDSEAKRLGVKRFGGETVLAGSIIVRQRGTKFHAGTNVGLGTDHTLYAKATGKILFEVKGPLNRKYVSIVAE.

The disordered stretch occupies residues 1–20 (MAHKKAGGSSRNGRDSEAKR).

The protein belongs to the bacterial ribosomal protein bL27 family.

This Aeromonas salmonicida (strain A449) protein is Large ribosomal subunit protein bL27.